Here is a 548-residue protein sequence, read N- to C-terminus: Chaperonin GroEL (548 aa).

ATP-binding positions include 30 to 33 (TLGP), lysine 51, 87 to 91 (DGTTT), glycine 415, and aspartate 495.

This sequence belongs to the chaperonin (HSP60) family. Forms a cylinder of 14 subunits composed of two heptameric rings stacked back-to-back. Interacts with the co-chaperonin GroES.

Its subcellular location is the cytoplasm. It carries out the reaction ATP + H2O + a folded polypeptide = ADP + phosphate + an unfolded polypeptide.. Together with its co-chaperonin GroES, plays an essential role in assisting protein folding. The GroEL-GroES system forms a nano-cage that allows encapsulation of the non-native substrate proteins and provides a physical environment optimized to promote and accelerate protein folding. The polypeptide is Chaperonin GroEL (Colwellia psychrerythraea (strain 34H / ATCC BAA-681) (Vibrio psychroerythus)).